Here is a 285-residue protein sequence, read N- to C-terminus: Probable endonuclease 4 (285 aa).

Positions 69, 109, 145, 179, 182, 216, 229, 231, and 261 each coordinate Zn(2+).

The protein belongs to the AP endonuclease 2 family. Requires Zn(2+) as cofactor.

It carries out the reaction Endonucleolytic cleavage to 5'-phosphooligonucleotide end-products.. Endonuclease IV plays a role in DNA repair. It cleaves phosphodiester bonds at apurinic or apyrimidinic (AP) sites, generating a 3'-hydroxyl group and a 5'-terminal sugar phosphate. The polypeptide is Probable endonuclease 4 (Citrobacter koseri (strain ATCC BAA-895 / CDC 4225-83 / SGSC4696)).